Here is a 69-residue protein sequence, read N- to C-terminus: Mu-conotoxin-like Am3.1 (69 aa).

Positions 1–20 (MMSKLRVLLIICLLLFPLTA) are cleaved as a signal peptide. A propeptide spanning residues 21-52 (VPLDGDQPADRPAERTQDDISSEHHPMFDAVR) is cleaved from the precursor. The segment at 22-43 (PLDGDQPADRPAERTQDDISSE) is disordered. Over residues 28–43 (PADRPAERTQDDISSE) the composition is skewed to basic and acidic residues. Position 66 is a 4-hydroxyproline; partial; in minor form (Pro-66). At Cys-68 the chain carries Cysteine amide.

This sequence belongs to the conotoxin M family. In terms of processing, mostly non-hydroxylated. Contains 3 disulfide bonds. Expressed by the venom duct.

It is found in the secreted. Functionally, mu-conotoxins block voltage-gated sodium channels (Nav). In Conus amadis (Amadis cone), this protein is Mu-conotoxin-like Am3.1.